A 1007-amino-acid chain; its full sequence is Kinesin-like protein KIN-7D, chloroplastic (1007 aa).

A chloroplast-targeting transit peptide spans 1–53 (MATRPASRQRRASSAAAAVAVVRSSPQPQQQQQQQLPIPQSGSPTSTTTTTTS). Over residues 1–55 (MATRPASRQRRASSAAAAVAVVRSSPQPQQQQQQQLPIPQSGSPTSTTTTTTSSS) the composition is skewed to low complexity. Residues 1–79 (MATRPASRQR…LFAGLDEDPA (79 aa)) are disordered. The region spanning 83–402 (NVTVTVRFRP…LKFAHRAKRI (320 aa)) is the Kinesin motor domain. 163–170 (GVTSSGKT) contributes to the ATP binding site. Positions 403–495 (EVQASQNKII…QRLTKLILVS (93 aa)) form a coiled coil. A disordered region spans residues 579-607 (ILTSSEGDKSSLTKSTAPSTPIGESVNFP). Coiled-coil stretches lie at residues 687 to 716 (NNEKIQMEMKKVNDEIKGKKHQIASLERQI), 754 to 791 (AADNRVIQDQLNEKTTECMELQEEVAHLKEQLYQTLQA), and 836 to 907 (SVEI…SVRS). Residues 901–941 (ELASVRSPTPRRANSGLRGTRRDSISRRHEPAPRRDNNAGY) are disordered. Basic and acidic residues predominate over residues 920–941 (TRRDSISRRHEPAPRRDNNAGY). Positions 942–982 (EREKALEAVLMEKEQKEAELQRRIEESKQKEAFLESELANM) form a coiled coil.

This sequence belongs to the TRAFAC class myosin-kinesin ATPase superfamily. Kinesin family. KIN-7 subfamily. Binds microtubules. Homodimer. The cofactor is Mg(2+).

The protein localises to the plastid. Its subcellular location is the chloroplast. Functionally, probable minus end-directed motor protein with a microtubule-enhanced ATPase activity. Binds ATP/ADP in vitro. Retains total enzymatic activity even after the removal of the ADP bound in the active site. This chain is Kinesin-like protein KIN-7D, chloroplastic, found in Oryza sativa subsp. japonica (Rice).